The primary structure comprises 82 residues: MENDAGQVTELYIPRKCSATNRMITSKDHASVQLNIGHLDANGLYTGQFTTFALCGFVRAQGDADSGVDRLWQKKKVEAKQQ.

An N-acetylmethionine modification is found at M1.

Belongs to the eukaryotic ribosomal protein eS21 family.

The chain is Small ribosomal subunit protein eS21z (RPS21B) from Arabidopsis thaliana (Mouse-ear cress).